The following is a 722-amino-acid chain: Polyribonucleotide nucleotidyltransferase (722 aa).

2 residues coordinate Mg(2+): Asp487 and Asp493. Residues 554-613 (PRIETFKIPTDKIREVIGTGGKVIREIVEKTGAKVNIEDDGTVKVASSDGESIKAAIKWI) form the KH domain. Residues 623-691 (GEIYEGTVVK…DRGKTRLSMK (69 aa)) enclose the S1 motif domain. Residues 697-722 (TGEDLEAKQKAEAKAEGEAPAQAAGE) are disordered. Basic and acidic residues predominate over residues 701–713 (LEAKQKAEAKAEG).

This sequence belongs to the polyribonucleotide nucleotidyltransferase family. Mg(2+) is required as a cofactor.

Its subcellular location is the cytoplasm. It catalyses the reaction RNA(n+1) + phosphate = RNA(n) + a ribonucleoside 5'-diphosphate. In terms of biological role, involved in mRNA degradation. Catalyzes the phosphorolysis of single-stranded polyribonucleotides processively in the 3'- to 5'-direction. The polypeptide is Polyribonucleotide nucleotidyltransferase (Rhodopseudomonas palustris (strain ATCC BAA-98 / CGA009)).